We begin with the raw amino-acid sequence, 425 residues long: UDP-N-acetylglucosamine 1-carboxyvinyltransferase (425 aa).

23 to 24 (KN) lines the phosphoenolpyruvate pocket. Arginine 100 contributes to the UDP-N-acetyl-alpha-D-glucosamine binding site. Cysteine 124 acts as the Proton donor in catalysis. The residue at position 124 (cysteine 124) is a 2-(S-cysteinyl)pyruvic acid O-phosphothioketal. 2 residues coordinate UDP-N-acetyl-alpha-D-glucosamine: aspartate 313 and isoleucine 335.

The protein belongs to the EPSP synthase family. MurA subfamily.

The protein localises to the cytoplasm. The enzyme catalyses phosphoenolpyruvate + UDP-N-acetyl-alpha-D-glucosamine = UDP-N-acetyl-3-O-(1-carboxyvinyl)-alpha-D-glucosamine + phosphate. It functions in the pathway cell wall biogenesis; peptidoglycan biosynthesis. Cell wall formation. Adds enolpyruvyl to UDP-N-acetylglucosamine. The protein is UDP-N-acetylglucosamine 1-carboxyvinyltransferase of Wolbachia sp. subsp. Drosophila simulans (strain wRi).